The chain runs to 611 residues: Protein decapping 5 (611 aa).

One can recognise a Sm domain in the interval Lys9–Pro92. Disordered stretches follow at residues His111–Leu153, Gly183–Leu238, Ser264–Pro301, Glu318–Lys362, Gln396–Ser455, and Phe519–Thr611. Polar residues-rich tracts occupy residues Pro117 to Pro140 and Asn203 to Phe214. Residues Ser264–Ser281 show a composition bias toward low complexity. Polar residues-rich tracts occupy residues Glu318–Ser330, Gln396–Ala413, and Ala424–Asn437. Residues Tyr441–Gly453 show a composition bias toward basic residues. In terms of domain architecture, DFDF spans Gly453–Leu489. The FFD box signature appears at Pro512–Thr527. A compositionally biased stretch (basic and acidic residues) spans Ile528 to Thr547. Positions Asn534–Ser554 match the TFG box motif. Residues Gly559 to Arg604 are compositionally biased toward gly residues.

Belongs to the LSM14 family. In terms of assembly, homodimer. Component of the decapping complex. Interacts with DCP1 and DCP2.

The protein localises to the cytoplasm. It is found in the P-body. Functionally, as a component of the decapping complex, involved in the degradation of mRNAs. Promotes P-body formation. Translational repressor. In Arabidopsis thaliana (Mouse-ear cress), this protein is Protein decapping 5 (DCP5).